The chain runs to 117 residues: Photosystem II reaction center Psb28 protein (117 aa).

This sequence belongs to the Psb28 family. Part of the photosystem II complex.

It is found in the cellular thylakoid membrane. In Prochlorococcus marinus subsp. pastoris (strain CCMP1986 / NIES-2087 / MED4), this protein is Photosystem II reaction center Psb28 protein.